We begin with the raw amino-acid sequence, 310 residues long: Cytosolic Fe-S cluster assembly factor Nubp1 homolog (310 aa).

Positions 8, 22, 25, and 31 each coordinate [4Fe-4S] cluster. 62–69 (GKGGVGKS) lines the ATP pocket. The [4Fe-4S] cluster site is built by C239 and C242.

It belongs to the Mrp/NBP35 ATP-binding proteins family. NUBP1/NBP35 subfamily. In terms of assembly, heterotetramer of 2 Nubp1 and 2 Nubp2 chains. It depends on [4Fe-4S] cluster as a cofactor.

The protein resides in the cytoplasm. Functionally, component of the cytosolic iron-sulfur (Fe/S) protein assembly (CIA) machinery. Required for maturation of extramitochondrial Fe-S proteins. The Nubp1-Nubp2 heterotetramer forms a Fe-S scaffold complex, mediating the de novo assembly of an Fe-S cluster and its transfer to target apoproteins. This chain is Cytosolic Fe-S cluster assembly factor Nubp1 homolog, found in Drosophila ananassae (Fruit fly).